The sequence spans 67 residues: Probable Sec-independent protein translocase protein TatE (67 aa).

Residues 4–21 form a helical membrane-spanning segment; that stretch reads ISITKLLVIAALVVLLFG. A disordered region spans residues 44–67; that stretch reads NDDDTGAKTPAASEAPAERLSHKE.

This sequence belongs to the TatA/E family. TatE subfamily.

The protein resides in the cell inner membrane. Part of the twin-arginine translocation (Tat) system that transports large folded proteins containing a characteristic twin-arginine motif in their signal peptide across membranes. TatE shares overlapping functions with TatA. The polypeptide is Probable Sec-independent protein translocase protein TatE (Cronobacter sakazakii (strain ATCC BAA-894) (Enterobacter sakazakii)).